Consider the following 188-residue polypeptide: UPF0301 protein XOO1309 (188 aa).

This sequence belongs to the UPF0301 (AlgH) family.

The chain is UPF0301 protein XOO1309 from Xanthomonas oryzae pv. oryzae (strain MAFF 311018).